The sequence spans 322 residues: Phthalate dioxygenase reductase (322 aa).

The 103-residue stretch at 7–109 (DGFLRLKIAS…SLPRNEFPLD (103 aa)) folds into the FAD-binding FR-type domain. FMN is bound by residues 56–57 (RT), 73–75 (AVK), 81–84 (RGGS), threonine 125, and phenylalanine 226. A 2Fe-2S ferredoxin-type domain is found at 239-322 (FTVRLSRSGT…AKSAELVLDL (84 aa)). Residue cysteine 273 participates in [2Fe-2S] cluster binding. Serine 275 is a binding site for FMN. The [2Fe-2S] cluster site is built by cysteine 278, cysteine 281, and cysteine 309.

The protein belongs to the PDR/VanB family. In terms of assembly, monomer. It depends on FMN as a cofactor.

Functionally, component of the electron transfer chain involved in pyridine nucleotide-dependent dihydroxylation of phthalate. Utilizes FMN to mediate electron transfer from the two-electron donor, NADH, to the one-electron acceptor, (2Fe-2S). The sequence is that of Phthalate dioxygenase reductase (ophA1) from Burkholderia cepacia (Pseudomonas cepacia).